The sequence spans 258 residues: Synapse differentiation-inducing gene protein 1 (258 aa).

The Cytoplasmic portion of the chain corresponds to 1 to 181 (MAGVVEQKSG…NFLVMPPRDH (181 aa)). Serine 137 bears the Phosphoserine mark. A helical transmembrane segment spans residues 182 to 202 (LGLSVFSMLCCFWPLGIAAFY). Residues 203–228 (LSHETNKAVAKGDFHQASTSSRRALF) are Extracellular-facing. Positions 229–249 (LAVLSITIGTGIYVGVAVALI) form an intramembrane region, helical. At 250 to 258 (AYLSKSNHL) the chain is on the extracellular side.

The protein belongs to the CD225/Dispanin family. Homodimer. Interacts with GRIA1 and GRIA2.

The protein localises to the cell membrane. It is found in the early endosome membrane. Its subcellular location is the postsynaptic density membrane. The protein resides in the synapse. It localises to the cell projection. The protein localises to the dendrite. It is found in the dendritic spine. Functionally, may regulate AMPA receptor content at nascent synapses, and have a role in postsynaptic development and maturation. This chain is Synapse differentiation-inducing gene protein 1 (SYNDIG1), found in Bos taurus (Bovine).